Here is a 314-residue protein sequence, read N- to C-terminus: tRNA dimethylallyltransferase (314 aa).

15-22 (GPTATGKS) is a binding site for ATP. 17–22 (TATGKS) is a substrate binding site. The interaction with substrate tRNA stretch occupies residues 40 to 43 (DSML).

This sequence belongs to the IPP transferase family. As to quaternary structure, monomer. Mg(2+) serves as cofactor.

The catalysed reaction is adenosine(37) in tRNA + dimethylallyl diphosphate = N(6)-dimethylallyladenosine(37) in tRNA + diphosphate. Its function is as follows. Catalyzes the transfer of a dimethylallyl group onto the adenine at position 37 in tRNAs that read codons beginning with uridine, leading to the formation of N6-(dimethylallyl)adenosine (i(6)A). The polypeptide is tRNA dimethylallyltransferase (Pelotomaculum thermopropionicum (strain DSM 13744 / JCM 10971 / SI)).